The chain runs to 433 residues: Probable non-inhibitory serpin-Z5 (433 aa).

Residues 1–12 are compositionally biased toward basic and acidic residues; that stretch reads MEPKEKKQKLDT. Residues 1–43 are disordered; sequence MEPKEKKQKLDTSEVASPSLSKTHLKKKKTKKQKIRKSQEITS. The segment covering 23–36 has biased composition (basic residues); that stretch reads THLKKKKTKKQKIR. The interval 380–404 is RCL; the sequence is GTEAVTFTAFRSAYLGCALVKPIDF.

It belongs to the serpin family. Weakly expressed during seedling development.

This is Probable non-inhibitory serpin-Z5 from Arabidopsis thaliana (Mouse-ear cress).